The primary structure comprises 427 residues: 3-phosphoshikimate 1-carboxyvinyltransferase (427 aa).

Residues Lys-22, Ser-23, and Arg-27 each coordinate 3-phosphoshikimate. A phosphoenolpyruvate-binding site is contributed by Lys-22. 2 residues coordinate phosphoenolpyruvate: Gly-96 and Arg-124. The 3-phosphoshikimate site is built by Ser-169, Ser-170, Gln-171, Ser-197, Asp-313, Asn-336, and Lys-340. Position 171 (Gln-171) interacts with phosphoenolpyruvate. The Proton acceptor role is filled by Asp-313. Phosphoenolpyruvate-binding residues include Arg-344, Arg-386, and Lys-411.

Belongs to the EPSP synthase family. As to quaternary structure, monomer.

The protein resides in the cytoplasm. The catalysed reaction is 3-phosphoshikimate + phosphoenolpyruvate = 5-O-(1-carboxyvinyl)-3-phosphoshikimate + phosphate. Its pathway is metabolic intermediate biosynthesis; chorismate biosynthesis; chorismate from D-erythrose 4-phosphate and phosphoenolpyruvate: step 6/7. Its function is as follows. Catalyzes the transfer of the enolpyruvyl moiety of phosphoenolpyruvate (PEP) to the 5-hydroxyl of shikimate-3-phosphate (S3P) to produce enolpyruvyl shikimate-3-phosphate and inorganic phosphate. The polypeptide is 3-phosphoshikimate 1-carboxyvinyltransferase (Escherichia coli O8 (strain IAI1)).